The sequence spans 291 residues: Probable ABC transporter permease protein PH1038 (291 aa).

8 consecutive transmembrane segments (helical) span residues 7 to 27 (PFFFLLPALTLMVPFVIYPVF), 75 to 95 (IVWIAIHLPTTIFLGLGFALL), 106 to 126 (IIKSIIFLGMVIPMVVGGLII), 133 to 153 (GAGVIPAFFKLIGIEKLAITW), 160 to 180 (ALFSVILGSIWIWTGFSMLMY), 208 to 228 (FVIWPLLRPITVVIVAMTLLW), 232 to 252 (IFDIVYVATGGGPGGASMVLA), and 267 to 287 (YAAVVAVLLTALTFIPALWLI). Positions 71–286 (LIHNIVWIAI…ALTFIPALWL (216 aa)) constitute an ABC transmembrane type-1 domain.

Belongs to the binding-protein-dependent transport system permease family. MalFG subfamily.

It is found in the cell membrane. Probably part of a binding-protein-dependent transport system PH1036/38/39. Probably responsible for the translocation of the substrate across the membrane. This Pyrococcus horikoshii (strain ATCC 700860 / DSM 12428 / JCM 9974 / NBRC 100139 / OT-3) protein is Probable ABC transporter permease protein PH1038.